The primary structure comprises 2528 residues: Highly reducing polyketide synthase pspA (2528 aa).

The interval 1–53 (MLAQDVEFVDLPPPEATAGAATTDNETSSFNSNPVPTPSEASSIGPPHQLPVP) is disordered. Over residues 24–42 (DNETSSFNSNPVPTPSEAS) the composition is skewed to polar residues. The Ketosynthase family 3 (KS3) domain maps to 63 to 483 (VEPMAICGMA…GSNAHVLLGS (421 aa)). Catalysis depends on for beta-ketoacyl synthase activity residues Cys-235, His-371, and His-406. A malonyl-CoA:ACP transacylase (MAT) domain region spans residues 590–909 (TFTGQGAQWA…HKDLLKAVGE (320 aa)). The N-terminal hotdog fold stretch occupies residues 961-1089 (HDILGSRVLE…GQVCAGSDRE (129 aa)). A dehydratase (DH) domain region spans residues 961-1230 (HDILGSRVLE…VSNGHVTIDI (270 aa)). Residues 961–1244 (HDILGSRVLE…MSAIGDAADA (284 aa)) form the PKS/mFAS DH domain. His-993 serves as the catalytic Proton acceptor; for dehydratase activity. Residues 1099-1244 (PRQLSRRGWY…MSAIGDAADA (146 aa)) are C-terminal hotdog fold. The active-site Proton donor; for dehydratase activity is Asp-1160. Positions 1409–1587 (VFLELLAHRK…GFSGINLVSH (179 aa)) are methyltransferase (CMet) domain. Residues 1803 to 2119 (GLVDTLCWKS…RGQHIGKIVI (317 aa)) form an enoyl reductase (ER) (ER) domain region. A ketoreductase (KR) domain region spans residues 2143–2322 (RAYLFVGGLG…ASTVNIGVIQ (180 aa)). Positions 2447–2525 (ETAELLAGEI…DLGVLAQKKL (79 aa)) constitute a Carrier domain. Ser-2485 is subject to O-(pantetheine 4'-phosphoryl)serine.

The catalysed reaction is 9 malonyl-CoA + acetyl-CoA + S-adenosyl-L-methionine + 13 NADPH + 20 H(+) = soppiline A + S-adenosyl-L-homocysteine + 9 CO2 + 13 NADP(+) + 10 CoA + 7 H2O. It functions in the pathway secondary metabolite biosynthesis. Its function is as follows. Highly reducing polyketide synthase; part of the gene cluster that mediates the biosynthesis of the alkylresorcinols called soppilines. The biosynthesis starts with the HR-PKS pspA-catalyzed carbon chain assembly through nine chain elongation cycles, using acetyl CoA and malonyl CoA as a starter and extender units, respectively, to produce the polyketide soppiline A. In the first round, the KR, DH, and CMeT domains work to produce 2-methyl-2-butenyl thioester. In rounds 2 to 5, the KR, DH, and ER domains fully catalyze the reduction of the elongated beta-ketothioester, resulting in the insertion of eight methylene units. The unusual Z,E,Z-triene motif is likely constructed during rounds 6 to 8. Typically, the DH domain introduces a double bond at an alpha,beta-position of an elongated polyketide chain, with the dehydration of a beta-hydroxy group. The last extension cycle would be carried out with L-oriented beta-ketoreduction by the KR domain to produce beta-hydroxy carboxylic acid soppiline A. The type III PKS pspB intercepts the elongated polyketide chain at round 8 from the HR-PKS pspA, followed by a tri-keto extension and decarboxylative aldol cyclization to produce 1,3,5-trisubstituted alkylresorcinol soppiline B. Subsequently, the cytochrome P450 monooxygenase pspC catalyzes three-step oxidations at the C-4 methyl group to carboxylic acid to yield soppiline C. In Penicillium soppii, this protein is Highly reducing polyketide synthase pspA.